Reading from the N-terminus, the 309-residue chain is Ribosomal protein L11 methyltransferase (309 aa).

Residues T152, G178, D200, and N242 each contribute to the S-adenosyl-L-methionine site.

Belongs to the methyltransferase superfamily. PrmA family.

The protein resides in the cytoplasm. It carries out the reaction L-lysyl-[protein] + 3 S-adenosyl-L-methionine = N(6),N(6),N(6)-trimethyl-L-lysyl-[protein] + 3 S-adenosyl-L-homocysteine + 3 H(+). Its function is as follows. Methylates ribosomal protein L11. The chain is Ribosomal protein L11 methyltransferase from Pelobacter propionicus (strain DSM 2379 / NBRC 103807 / OttBd1).